Here is a 240-residue protein sequence, read N- to C-terminus: Enoyl-CoA delta isomerase 1, peroxisomal (240 aa).

A Microbody targeting signal motif is present at residues 238–240 (SKL).

This sequence belongs to the enoyl-CoA hydratase/isomerase family.

The protein localises to the peroxisome. It carries out the reaction a (3Z)-enoyl-CoA = a 4-saturated (2E)-enoyl-CoA. The enzyme catalyses a (3E)-enoyl-CoA = a 4-saturated (2E)-enoyl-CoA. Its pathway is lipid metabolism; fatty acid beta-oxidation. Able to isomerize both 3-cis and 3-trans double bonds into the 2-trans form in a range of enoyl-CoA species. Essential for the beta oxidation of unsaturated fatty acids. In Arabidopsis thaliana (Mouse-ear cress), this protein is Enoyl-CoA delta isomerase 1, peroxisomal.